We begin with the raw amino-acid sequence, 372 residues long: NADH-quinone oxidoreductase subunit D (372 aa).

It belongs to the complex I 49 kDa subunit family. In terms of assembly, NDH-1 is composed of 14 different subunits. Subunits NuoB, C, D, E, F, and G constitute the peripheral sector of the complex.

It is found in the cell inner membrane. The enzyme catalyses a quinone + NADH + 5 H(+)(in) = a quinol + NAD(+) + 4 H(+)(out). In terms of biological role, NDH-1 shuttles electrons from NADH, via FMN and iron-sulfur (Fe-S) centers, to quinones in the respiratory chain. The immediate electron acceptor for the enzyme in this species is believed to be ubiquinone. Couples the redox reaction to proton translocation (for every two electrons transferred, four hydrogen ions are translocated across the cytoplasmic membrane), and thus conserves the redox energy in a proton gradient. This is NADH-quinone oxidoreductase subunit D from Desulfotalea psychrophila (strain LSv54 / DSM 12343).